The sequence spans 226 residues: Leucyl/phenylalanyl-tRNA--protein transferase (226 aa).

Belongs to the L/F-transferase family.

It localises to the cytoplasm. It catalyses the reaction N-terminal L-lysyl-[protein] + L-leucyl-tRNA(Leu) = N-terminal L-leucyl-L-lysyl-[protein] + tRNA(Leu) + H(+). The catalysed reaction is N-terminal L-arginyl-[protein] + L-leucyl-tRNA(Leu) = N-terminal L-leucyl-L-arginyl-[protein] + tRNA(Leu) + H(+). The enzyme catalyses L-phenylalanyl-tRNA(Phe) + an N-terminal L-alpha-aminoacyl-[protein] = an N-terminal L-phenylalanyl-L-alpha-aminoacyl-[protein] + tRNA(Phe). Functions in the N-end rule pathway of protein degradation where it conjugates Leu, Phe and, less efficiently, Met from aminoacyl-tRNAs to the N-termini of proteins containing an N-terminal arginine or lysine. In Pseudomonas paraeruginosa (strain DSM 24068 / PA7) (Pseudomonas aeruginosa (strain PA7)), this protein is Leucyl/phenylalanyl-tRNA--protein transferase.